A 148-amino-acid polypeptide reads, in one-letter code: Lysozyme C (148 aa).

An N-terminal signal peptide occupies residues 1 to 18; the sequence is MKAVIILGLVLLSVTVQG. Residues 19–148 form the C-type lysozyme domain; it reads KIFERCELAR…VSQYVQGCGV (130 aa). Disulfide bonds link Cys24/Cys146, Cys48/Cys134, Cys83/Cys99, and Cys95/Cys113. Residues Glu53 and Asp71 contribute to the active site.

It belongs to the glycosyl hydrolase 22 family. Monomer.

It catalyses the reaction Hydrolysis of (1-&gt;4)-beta-linkages between N-acetylmuramic acid and N-acetyl-D-glucosamine residues in a peptidoglycan and between N-acetyl-D-glucosamine residues in chitodextrins.. Functionally, lysozymes have primarily a bacteriolytic function; those in tissues and body fluids are associated with the monocyte-macrophage system and enhance the activity of immunoagents. This chain is Lysozyme C (LYZ), found in Erythrocebus patas (Red guenon).